We begin with the raw amino-acid sequence, 843 residues long: Urease (843 aa).

A Urease domain is found at 400–843 (GGIDCHVHFI…VPLSRNYFLF (444 aa)). 3 residues coordinate Ni(2+): histidine 405, histidine 407, and lysine 488. Lysine 488 carries the N6-carboxylysine modification. Substrate is bound at residue histidine 490. Ni(2+)-binding residues include histidine 517 and histidine 543. Catalysis depends on histidine 591, which acts as the Proton donor. Aspartate 631 serves as a coordination point for Ni(2+).

It in the C-terminal section; belongs to the metallo-dependent hydrolases superfamily. Urease alpha subunit family. In terms of assembly, homohexamer. Other oligomeric forms may exist depending on pH and presence of salts. Ni(2+) is required as a cofactor. Carboxylation allows a single lysine to coordinate two nickel ions.

The catalysed reaction is urea + 2 H2O + H(+) = hydrogencarbonate + 2 NH4(+). The protein operates within nitrogen metabolism; urea degradation; CO(2) and NH(3) from urea (urease route): step 1/1. Functionally, urea hydrolase involved in nitrogen recycling from ureide, purine, and arginine catabolism. The sequence is that of Urease from Oryza sativa subsp. indica (Rice).